Reading from the N-terminus, the 325-residue chain is RNA ligase 1 (325 aa).

Requires Mg(2+) as cofactor. Mn(2+) serves as cofactor. AMPylates itself (auto-AMPylation).

The catalysed reaction is ATP + (ribonucleotide)n-3'-hydroxyl + 5'-phospho-(ribonucleotide)m = (ribonucleotide)n+m + AMP + diphosphate.. Its function is as follows. Functions as an RNA ligase, in vitro. The ligation reaction entails three nucleotidyl transfer steps. In the first step, the RNA ligase reacts with ATP in the absence of nucleic acid to form a covalent ligase-AMP intermediate and release pyrophosphate. In step 2, the ligase-AMP binds to the nucleic acid and transfers the adenylate to the 5'-PO4 terminus to form an adenylylated intermediate. In step 3, the RNA ligase directs the attack of the 3'-OH on the 5'-phosphoanhydride linkage, resulting in a repaired 3'-5' phosphodiester and release of AMP. Exhibits selectivity for single-stranded RNA substrates and may not have nick-sealing activity on double-stranded DNA-RNA hybrids. May play a role in maintaining RNA integrity under stress conditions, for example in response to reactive oxygen species (ROS). The sequence is that of RNA ligase 1 from Danio rerio (Zebrafish).